Consider the following 117-residue polypeptide: UPF0344 protein GWCH70_0687 (117 aa).

4 helical membrane passes run 2–22 (THAH…AVSL), 32–52 (IVQM…GLLL), 55–75 (IASI…LIGA), and 97–117 (IVAF…FDLF).

It belongs to the UPF0344 family.

It is found in the cell membrane. This Geobacillus sp. (strain WCH70) protein is UPF0344 protein GWCH70_0687.